The following is a 418-amino-acid chain: Gamma-glutamyl phosphate reductase (418 aa).

Belongs to the gamma-glutamyl phosphate reductase family.

The protein localises to the cytoplasm. The catalysed reaction is L-glutamate 5-semialdehyde + phosphate + NADP(+) = L-glutamyl 5-phosphate + NADPH + H(+). Its pathway is amino-acid biosynthesis; L-proline biosynthesis; L-glutamate 5-semialdehyde from L-glutamate: step 2/2. Its function is as follows. Catalyzes the NADPH-dependent reduction of L-glutamate 5-phosphate into L-glutamate 5-semialdehyde and phosphate. The product spontaneously undergoes cyclization to form 1-pyrroline-5-carboxylate. In Parafrankia sp. (strain EAN1pec), this protein is Gamma-glutamyl phosphate reductase.